The sequence spans 101 residues: NAD(P)H-quinone oxidoreductase subunit 4L, chloroplastic (101 aa).

The next 2 helical transmembrane spans lie at 2–22 (MFEH…YGLI) and 61–81 (IFSI…LAIV).

It belongs to the complex I subunit 4L family. NDH is composed of at least 16 different subunits, 5 of which are encoded in the nucleus.

It is found in the plastid. Its subcellular location is the chloroplast thylakoid membrane. The catalysed reaction is a plastoquinone + NADH + (n+1) H(+)(in) = a plastoquinol + NAD(+) + n H(+)(out). It carries out the reaction a plastoquinone + NADPH + (n+1) H(+)(in) = a plastoquinol + NADP(+) + n H(+)(out). Functionally, NDH shuttles electrons from NAD(P)H:plastoquinone, via FMN and iron-sulfur (Fe-S) centers, to quinones in the photosynthetic chain and possibly in a chloroplast respiratory chain. The immediate electron acceptor for the enzyme in this species is believed to be plastoquinone. Couples the redox reaction to proton translocation, and thus conserves the redox energy in a proton gradient. The polypeptide is NAD(P)H-quinone oxidoreductase subunit 4L, chloroplastic (Dioscorea elephantipes (Elephant's foot yam)).